Here is a 106-residue protein sequence, read N- to C-terminus: Large ribosomal subunit protein P1B (106 aa).

Ser2 carries the post-translational modification N-acetylserine. The segment covering 69 to 82 (AGAASGAAAAGGDA) has biased composition (low complexity). The interval 69–106 (AGAASGAAAAGGDAAAEEEKEEEAAEESDDDMGFGLFD) is disordered. A compositionally biased stretch (acidic residues) spans 83-100 (AAEEEKEEEAAEESDDDM). Phosphoserine is present on Ser96.

Belongs to the eukaryotic ribosomal protein P1/P2 family. In terms of assembly, component of the large ribosomal subunit (LSU). Mature yeast ribosomes consist of a small (40S) and a large (60S) subunit. The 40S small subunit contains 1 molecule of ribosomal RNA (18S rRNA) and 33 different proteins (encoded by 57 genes). The large 60S subunit contains 3 rRNA molecules (25S, 5.8S and 5S rRNA) and 46 different proteins (encoded by 81 genes). The 5 acidic ribosomal P-proteins form the stalk structure of the 60S subunit. They are organized as a pentameric complex in which uL10/P0 interacts with 2 heterodimers, P1A-P2B and P1B-P2A.

It is found in the cytoplasm. Its function is as follows. Component of the ribosome, a large ribonucleoprotein complex responsible for the synthesis of proteins in the cell. The small ribosomal subunit (SSU) binds messenger RNAs (mRNAs) and translates the encoded message by selecting cognate aminoacyl-transfer RNA (tRNA) molecules. The large subunit (LSU) contains the ribosomal catalytic site termed the peptidyl transferase center (PTC), which catalyzes the formation of peptide bonds, thereby polymerizing the amino acids delivered by tRNAs into a polypeptide chain. The nascent polypeptides leave the ribosome through a tunnel in the LSU and interact with protein factors that function in enzymatic processing, targeting, and the membrane insertion of nascent chains at the exit of the ribosomal tunnel. The chain is Large ribosomal subunit protein P1B from Saccharomyces cerevisiae (strain ATCC 204508 / S288c) (Baker's yeast).